A 588-amino-acid chain; its full sequence is MGGLEKKKYERGSATNYITRNKARKKLQLSLADFRRLCILKGIYPHEPKHKKKVNKGSTAARTFYLIKDIRFLLHEPIVNKFREYKVFVRKLRKAYGKSEWNTVERLKDNKPNYKLDHIIKERYPTFIDALRDLDDALSMCFLFSTFPRTGKCHVQTIQLCRRLTVEFMHYIIAARALRKVFLSIKGIYYQAEVLGQPIVWITPYAFSHDHPTDVDYRVMATFTEFYTTLLGFVNFRLYQLLNLHYPPKLEGQAQAEAKAGEGTYALDSESCMEKLAALSASLARVVVPATEEEAEVDEFPTDGEMSAQEEDRRKELEAQEKHKKLFEGLKFFLNREVPREALAFIIRSFGGEVSWDKSLCIGATYDVTDSRITHQIVDRPGQQTSVIGRCYVQPQWVFDSVNARLLLPVAEYFSGVQLPPHLSPFVTEKEGDYVPPEKLKLLALQRGEDPGNLNESEEEEEEDDNNEGDGDEEGENEEEEEDAEAGSEKEEEARLAALEEQRMEGKKPRVMAGTLKLEDKQRLAQEEESEAKRLAIMMMKKREKYLYQKIMFGKRRKIREANKLAEKRKAHDEAVRSEKKAKKARPE.

The required for 28S ribosomal RNA processing stretch occupies residues 1–54 (MGGLEKKKYERGSATNYITRNKARKKLQLSLADFRRLCILKGIYPHEPKHKKKV). The tract at residues 1 to 257 (MGGLEKKKYE…PKLEGQAQAE (257 aa)) is sufficient for nucleolar localization. K98 is modified (N6-acetyllysine). Positions 294–314 (EAEVDEFPTDGEMSAQEEDRR) are disordered. A sufficient for interaction with MAP1B region spans residues 306–415 (MSAQEEDRRK…LLLPVAEYFS (110 aa)). Residues 322–415 (KHKKLFEGLK…LLLPVAEYFS (94 aa)) enclose the BRCT domain. A disordered region spans residues 448 to 515 (GEDPGNLNES…GKKPRVMAGT (68 aa)). Residues 456–486 (ESEEEEEEDDNNEGDGDEEGENEEEEEDAEA) show a composition bias toward acidic residues. A compositionally biased stretch (basic and acidic residues) spans 487-508 (GSEKEEEARLAALEEQRMEGKK). A Glycyl lysine isopeptide (Lys-Gly) (interchain with G-Cter in SUMO1); alternate cross-link involves residue K517. K517 participates in a covalent cross-link: Glycyl lysine isopeptide (Lys-Gly) (interchain with G-Cter in SUMO2); alternate. The required for 28S ribosomal RNA processing stretch occupies residues 539–588 (MMKKREKYLYQKIMFGKRRKIREANKLAEKRKAHDEAVRSEKKAKKARPE). The tract at residues 565–588 (LAEKRKAHDEAVRSEKKAKKARPE) is disordered.

The protein belongs to the pescadillo family. Component of the PeBoW complex, composed of BOP1, PES1 and WDR12. The complex is held together by BOP1, which interacts with PES1 via its N-terminal domain and with WDR12 via a high-affinity interaction between the seven-bladed beta-propeller domains of the 2 proteins. The PeBoW complex associates with the 66S pre-ribosome. The PeBoW complex also associates with DDX27, PES1 interacts directly with DDX27. Interacts with IRS1 and UBTF. May interact with MAP1B. In terms of processing, sumoylated. As to expression, significant levels are detected in a variety of cancer cell lines, including glioblastoma, breast carcinoma, colon carcinoma and cervical carcinoma cells. Levels are abnormally elevated in malignant tumors of astrocytic origin.

The protein localises to the nucleus. It is found in the nucleolus. It localises to the nucleoplasm. Its subcellular location is the chromosome. Functionally, component of the PeBoW complex, which is required for maturation of 28S and 5.8S ribosomal RNAs and formation of the 60S ribosome. This chain is Pescadillo homolog, found in Homo sapiens (Human).